The chain runs to 139 residues: Histone H3-like 5 (139 aa).

The segment covering 1–10 (MARTKQTARI) has biased composition (polar residues). The segment at 1–43 (MARTKQTARISTGGKAPRKQLAPKAARQSAPATGGVKKPHRFR) is disordered. Lys-5 carries the N6,N6,N6-trimethyllysine; alternate modification. Lys-5 carries the N6,N6-dimethyllysine; alternate modification. N6-methyllysine; alternate is present on Lys-5. A Phosphoserine modification is found at Ser-11. At Thr-12 the chain carries Phosphothreonine. Position 15 is an N6-acetyllysine (Lys-15). N6-methyllysine; alternate is present on residues Lys-19 and Lys-24. Lys-19 and Lys-24 each carry N6-acetyllysine; alternate. Residue Ser-29 is modified to Phosphoserine. Lys-37 bears the N6,N6,N6-trimethyllysine; alternate mark. An N6,N6-dimethyllysine; alternate modification is found at Lys-37. Lys-37 carries the post-translational modification N6-methyllysine; alternate.

It belongs to the histone H3 family. The nucleosome is a histone octamer containing two molecules each of H2A, H2B, H3 and H4 assembled in one H3-H4 heterotetramer and two H2A-H2B heterodimers. The octamer wraps approximately 147 bp of DNA.

The protein localises to the nucleus. Its subcellular location is the chromosome. Functionally, core component of nucleosome. Nucleosomes wrap and compact DNA into chromatin, limiting DNA accessibility to the cellular machineries which require DNA as a template. Histones thereby play a central role in transcription regulation, DNA repair, DNA replication and chromosomal stability. DNA accessibility is regulated via a complex set of post-translational modifications of histones, also called histone code, and nucleosome remodeling. The protein is Histone H3-like 5 of Arabidopsis thaliana (Mouse-ear cress).